A 1019-amino-acid polypeptide reads, in one-letter code: Enteropeptidase (1019 aa).

The N-myristoyl glycine moiety is linked to residue Gly2. At 2-18 (GSKRGISSRHHSLSSYE) the chain is on the cytoplasmic side. A helical; Signal-anchor for type II membrane protein transmembrane segment spans residues 19 to 47 (IMFAALFAILVVLCAGLIAVSCLTIKESQ). Over 48–1019 (RGAALGQSHE…FTEWIQSFLH (972 aa)) the chain is Extracellular. The region spanning 54 to 169 (QSHEARATFK…NSVDILDKLT (116 aa)) is the SEA domain. 3 N-linked (GlcNAc...) asparagine glycosylation sites follow: Asn116, Asn147, and Asn179. An LDL-receptor class A 1 domain is found at 182–223 (IECLPGSSPCTDALTCIKADLFCDGEVNCPDGSDEDNKMCAT). Cystine bridges form between Cys184/Cys197, Cys191/Cys210, Cys204/Cys221, and Cys225/Cys253. The CUB 1 domain occupies 225–334 (CDGRFLLTGS…VGFNATYTAF (110 aa)). 8 N-linked (GlcNAc...) asparagine glycosylation sites follow: Asn328, Asn335, Asn388, Asn440, Asn470, Asn503, Asn534, and Asn630. One can recognise an MAM domain in the interval 342-504 (YEKINCNFED…ISLTYGICNG (163 aa)). Cys524 and Cys552 are disulfide-bonded. Positions 524-634 (CGGPFELWEP…GGFKANFTTG (111 aa)) constitute a CUB 2 domain. The region spanning 641-679 (EPCKADHFQCKNGECVPLVNLCDGHLHCEDGSDEADCVR) is the LDL-receptor class A 2 domain. 3 disulfide bridges follow: Cys643-Cys655, Cys650-Cys668, and Cys662-Cys677. One can recognise an SRCR domain in the interval 678-771 (VRFFNGTTNN…LIRLQCNHKS (94 aa)). N-linked (GlcNAc...) asparagine glycans are attached at residues Asn682, Asn706, and Asn725. 3 disulfide bridges follow: Cys757–Cys767, Cys772–Cys896, and Cys810–Cys826. Residues 785–1019 (IVGGSNAKEG…FTEWIQSFLH (235 aa)) form the Peptidase S1 domain. His825 serves as the catalytic Charge relay system. Residue Asn848 is glycosylated (N-linked (GlcNAc...) asparagine). Asp876 acts as the Charge relay system in catalysis. Asn887, Asn909, and Asn949 each carry an N-linked (GlcNAc...) asparagine glycan. Cystine bridges form between Cys910/Cys977, Cys941/Cys956, and Cys967/Cys995. Residue Ser971 is the Charge relay system of the active site.

It belongs to the peptidase S1 family. Heterodimer of a catalytic (light) chain and a multidomain (heavy) chain linked by a disulfide bond. Post-translationally, the chains are derived from a single precursor that is cleaved by a trypsin-like protease. In terms of tissue distribution, intestinal brush border.

It is found in the membrane. It carries out the reaction Activation of trypsinogen by selective cleavage of 6-Lys-|-Ile-7 bond.. Responsible for initiating activation of pancreatic proteolytic proenzymes (trypsin, chymotrypsin and carboxypeptidase A). It catalyzes the conversion of trypsinogen to trypsin which in turn activates other proenzymes including chymotrypsinogen, procarboxypeptidases, and proelastases. This is Enteropeptidase (TMPRSS15) from Homo sapiens (Human).